Consider the following 86-residue polypeptide: Small ribosomal subunit protein bS20 (86 aa).

Residues 1–25 (MANIKSQIKRNKQNEKRHERNKAVK) are disordered. Over residues 12–22 (KQNEKRHERNK) the composition is skewed to basic and acidic residues.

This sequence belongs to the bacterial ribosomal protein bS20 family.

In terms of biological role, binds directly to 16S ribosomal RNA. In Nocardioides sp. (strain ATCC BAA-499 / JS614), this protein is Small ribosomal subunit protein bS20.